The sequence spans 156 residues: Oxidized purine nucleoside triphosphate hydrolase (156 aa).

The Nudix hydrolase domain maps to 3-132 (TSRLYTLVLV…WFPLLLQKKK (130 aa)). Thr-8 provides a ligand contact to 2-oxo-dATP. Position 23 (Lys-23) interacts with 8-oxo-dGTP. 2-oxo-dATP contacts are provided by residues Asn-33 and 35 to 38 (FGGK). Residues Gly-36, Glu-52, Glu-55, Glu-56, and Glu-100 each contribute to the Mg(2+) site. A Nudix box motif is present at residues 37 to 58 (GKVQEGETIEDGAKRELREESG). 117-120 (WPDD) lines the 2-oxo-dATP pocket.

This sequence belongs to the Nudix hydrolase family. As to quaternary structure, monomer. The cofactor is Mg(2+).

Its subcellular location is the cytoplasm. The protein resides in the nucleus. The protein localises to the nucleus membrane. It is found in the cytoplasmic vesicle. It localises to the secretory vesicle. Its subcellular location is the acrosome. The enzyme catalyses 2-oxo-dATP + H2O = 2-oxo-dAMP + diphosphate + H(+). It catalyses the reaction 2-oxo-ATP + H2O = 2-oxo-AMP + diphosphate + H(+). The catalysed reaction is 8-oxo-dGTP + H2O = 8-oxo-dGMP + diphosphate + H(+). It carries out the reaction 8-oxo-dATP + H2O = 8-oxo-dAMP + diphosphate + H(+). The enzyme catalyses O(6)-methyl-dGTP + H2O = O(6)-methyl-dGMP + diphosphate + H(+). It catalyses the reaction N(6)-methyl-dATP + H2O = N(6)-methyl-dAMP + diphosphate + H(+). The catalysed reaction is N(6)-methyl-ATP + H2O = N(6)-methyl-AMP + diphosphate + H(+). In terms of biological role, oxidized purine nucleoside triphosphate hydrolase which is a prominent sanitizer of the oxidized nucleotide pool. Catalyzes the hydrolysis of 2-oxo-dATP (2-hydroxy-dATP) into 2-oxo-dAMP. Also has a significant hydrolase activity toward 2-oxo-ATP, 8-oxo-dGTP and 8-oxo-dATP. Through the hydrolysis of oxidized purine nucleoside triphosphates, prevents their incorporation into DNA and the subsequent transversions A:T to C:G and G:C to T:A. Also catalyzes the hydrolysis of methylated purine nucleoside triphosphate preventing their integration into DNA. Through this antimutagenic activity protects cells from oxidative stress. This chain is Oxidized purine nucleoside triphosphate hydrolase (NUDT1), found in Canis lupus familiaris (Dog).